The sequence spans 299 residues: 4-diphosphocytidyl-2-C-methyl-D-erythritol kinase (299 aa).

Residue Lys-20 is part of the active site. 106-116 (PMGGGLGGGSS) contacts ATP. Asp-148 is an active-site residue.

Belongs to the GHMP kinase family. IspE subfamily. In terms of assembly, homodimer.

The enzyme catalyses 4-CDP-2-C-methyl-D-erythritol + ATP = 4-CDP-2-C-methyl-D-erythritol 2-phosphate + ADP + H(+). It participates in isoprenoid biosynthesis; isopentenyl diphosphate biosynthesis via DXP pathway; isopentenyl diphosphate from 1-deoxy-D-xylulose 5-phosphate: step 3/6. Catalyzes the phosphorylation of the position 2 hydroxy group of 4-diphosphocytidyl-2C-methyl-D-erythritol. This Yersinia pseudotuberculosis serotype O:1b (strain IP 31758) protein is 4-diphosphocytidyl-2-C-methyl-D-erythritol kinase.